We begin with the raw amino-acid sequence, 369 residues long: 3-dehydroquinate synthase (369 aa).

Residues 71-76 (DGECHK), 105-109 (GVIND), 129-130 (TT), K142, K151, and 169-172 (TLST) contribute to the NAD(+) site. 3 residues coordinate Zn(2+): E184, H247, and H264.

It belongs to the sugar phosphate cyclases superfamily. Dehydroquinate synthase family. Requires Co(2+) as cofactor. It depends on Zn(2+) as a cofactor. NAD(+) is required as a cofactor.

The protein localises to the cytoplasm. The catalysed reaction is 7-phospho-2-dehydro-3-deoxy-D-arabino-heptonate = 3-dehydroquinate + phosphate. It participates in metabolic intermediate biosynthesis; chorismate biosynthesis; chorismate from D-erythrose 4-phosphate and phosphoenolpyruvate: step 2/7. Catalyzes the conversion of 3-deoxy-D-arabino-heptulosonate 7-phosphate (DAHP) to dehydroquinate (DHQ). The chain is 3-dehydroquinate synthase from Dichelobacter nodosus (strain VCS1703A).